The sequence spans 378 residues: Sperm microtubule associated protein 2 (378 aa).

2 disordered regions span residues 1-35 (MGEL…SDGS) and 47-79 (WLQS…LPEV). The segment covering 47–56 (WLQSSQATTE) has biased composition (polar residues). The span at 61–77 (DPEEEIPPEEMVGEELP) shows a compositional bias: acidic residues. THEG repeat units follow at residues 113 to 132 (AKCR…PKFN), 179 to 198 (TITV…PKRF), 217 to 236 (STLE…PKIR), 253 to 272 (AAQM…PRAP), 285 to 304 (PKPY…PKAL), 321 to 340 (VTKN…PKIR), and 355 to 374 (ASLV…PKHI). Ser290 carries the phosphoserine modification.

Interacts with CCT5.

The protein resides in the nucleus. Its function is as follows. May be involved (but not essential) in spermatogenesis. This chain is Sperm microtubule associated protein 2, found in Rattus norvegicus (Rat).